Consider the following 331-residue polypeptide: D-alanine--D-alanine ligase (331 aa).

Residues 116-316 form the ATP-grasp domain; it reads KRLWQTHSLP…YEDFVLQLAA (201 aa). Position 142 to 197 (142 to 197) interacts with ATP; it reads ADRLGLPLIVKPAREGSSIGLTKVTSVAELPAAYEKAARLDRDVMAEQFIDGDELT. The Mg(2+) site is built by Asp-269, Glu-283, and Asn-285.

This sequence belongs to the D-alanine--D-alanine ligase family. The cofactor is Mg(2+). Mn(2+) is required as a cofactor.

The protein resides in the cytoplasm. It catalyses the reaction 2 D-alanine + ATP = D-alanyl-D-alanine + ADP + phosphate + H(+). It functions in the pathway cell wall biogenesis; peptidoglycan biosynthesis. Cell wall formation. This is D-alanine--D-alanine ligase from Ralstonia nicotianae (strain ATCC BAA-1114 / GMI1000) (Ralstonia solanacearum).